Here is a 189-residue protein sequence, read N- to C-terminus: Lipid A acyltransferase PagP (189 aa).

Positions 1–23 are cleaved as a signal peptide; it reads MRLKLILYFLILSCYLGIGSARA. Residues H61, D104, and S105 contribute to the active site.

This sequence belongs to the lipid A palmitoyltransferase family. In terms of assembly, homodimer.

The protein localises to the cell outer membrane. It carries out the reaction a lipid A + a 1,2-diacyl-sn-glycero-3-phosphocholine = a hepta-acyl lipid A + a 2-acyl-sn-glycero-3-phosphocholine. The enzyme catalyses a lipid IVA + a 1,2-diacyl-sn-glycero-3-phosphocholine = a lipid IVB + a 2-acyl-sn-glycero-3-phosphocholine. The catalysed reaction is a lipid IIA + a 1,2-diacyl-sn-glycero-3-phosphocholine = a lipid IIB + a 2-acyl-sn-glycero-3-phosphocholine. In terms of biological role, transfers a fatty acid residue from the sn-1 position of a phospholipid to the N-linked hydroxyfatty acid chain on the proximal unit of lipid A or its precursors. The protein is Lipid A acyltransferase PagP of Erwinia tasmaniensis (strain DSM 17950 / CFBP 7177 / CIP 109463 / NCPPB 4357 / Et1/99).